The chain runs to 88 residues: MGTARFLSAVLLLSVLLMVTFPALLSAEYHDGRVDICSLPSDSGDCLRFFEMWYFDGTTCTKFVYGGYGGNGNRFPTEKACMKRCVKA.

An N-terminal signal peptide occupies residues 1–27 (MGTARFLSAVLLLSVLLMVTFPALLSA). The propeptide occupies 28–33 (EYHDGR). Residues 37–85 (CSLPSDSGDCLRFFEMWYFDGTTCTKFVYGGYGGNGNRFPTEKACMKRC) enclose the BPTI/Kunitz inhibitor domain. Intrachain disulfides connect Cys-37–Cys-85 and Cys-60–Cys-81.

It belongs to the venom Kunitz-type family. 03 (sub-Kunitz) subfamily. Expressed by the venom gland.

It localises to the secreted. Serine protease inhibitor that inhibits trypsin at a molar ratio of 1:1. In Cyriopagopus schmidti (Chinese bird spider), this protein is Kunitz-type U15-theraphotoxin-Hs1d.